We begin with the raw amino-acid sequence, 399 residues long: Phosphopentomutase (399 aa).

Mn(2+)-binding residues include Asp10, Asp296, His301, Asp337, His338, and His349.

The protein belongs to the phosphopentomutase family. It depends on Mn(2+) as a cofactor.

It is found in the cytoplasm. The enzyme catalyses 2-deoxy-alpha-D-ribose 1-phosphate = 2-deoxy-D-ribose 5-phosphate. It carries out the reaction alpha-D-ribose 1-phosphate = D-ribose 5-phosphate. It participates in carbohydrate degradation; 2-deoxy-D-ribose 1-phosphate degradation; D-glyceraldehyde 3-phosphate and acetaldehyde from 2-deoxy-alpha-D-ribose 1-phosphate: step 1/2. Its function is as follows. Isomerase that catalyzes the conversion of deoxy-ribose 1-phosphate (dRib-1-P) and ribose 1-phosphate (Rib-1-P) to deoxy-ribose 5-phosphate (dRib-5-P) and ribose 5-phosphate (Rib-5-P), respectively. This Idiomarina loihiensis (strain ATCC BAA-735 / DSM 15497 / L2-TR) protein is Phosphopentomutase.